Reading from the N-terminus, the 364-residue chain is Dihydroorotate dehydrogenase (quinone) (364 aa).

FMN is bound by residues 61 to 65 (AGFDK) and threonine 85. Lysine 65 is a binding site for substrate. 110 to 114 (NRMGF) contributes to the substrate binding site. 2 residues coordinate FMN: asparagine 139 and asparagine 170. Asparagine 170 provides a ligand contact to substrate. Residue serine 173 is the Nucleophile of the active site. Asparagine 175 serves as a coordination point for substrate. Positions 214 and 242 each coordinate FMN. Residue 243–244 (NT) participates in substrate binding. FMN-binding positions include glycine 266, glycine 295, and 316-317 (YS).

The protein belongs to the dihydroorotate dehydrogenase family. Type 2 subfamily. Monomer. FMN is required as a cofactor.

Its subcellular location is the cell membrane. The enzyme catalyses (S)-dihydroorotate + a quinone = orotate + a quinol. Its pathway is pyrimidine metabolism; UMP biosynthesis via de novo pathway; orotate from (S)-dihydroorotate (quinone route): step 1/1. Functionally, catalyzes the conversion of dihydroorotate to orotate with quinone as electron acceptor. The sequence is that of Dihydroorotate dehydrogenase (quinone) from Rhodopseudomonas palustris (strain HaA2).